Reading from the N-terminus, the 322-residue chain is Transcription factor Atoh8 (322 aa).

3 disordered regions span residues 77–96 (PVPASVAPAVPPGGGTDTAR), 101–144 (IRAP…EAHS), and 159–221 (PPAR…ATAA). Over residues 101–111 (IRAPEVSDARK) the composition is skewed to basic and acidic residues. A basic motif; degenerate region spans residues 231–244 (TRRLLANARERTRV). The 53-residue stretch at 231 to 283 (TRRLLANARERTRVHTISAAFEALRKQVPCYSYGQKLSKLAILRIACNYILSL) folds into the bHLH domain. The helix-loop-helix motif stretch occupies residues 245–283 (HTISAAFEALRKQVPCYSYGQKLSKLAILRIACNYILSL).

Efficient DNA binding requires dimerization with another bHLH protein. Interacts with NEUROG3 and NEUROD1. Interacts with ZFPM2; mediates indirect interaction with GATA4. Forms a heterodimer with TCF3; repress transcription of TCF3 and TCF3/NEUROG3 dimer-induced transactivation of E box-dependent promoters. In terms of tissue distribution, expressed by subsets of mature neurons. Expressed in kidney (podocytes). Expression is restricted to the atria, lung mesenchyme, and vascular smooth muscle.

Its subcellular location is the nucleus. The protein localises to the nucleus speckle. The protein resides in the cytoplasm. Functionally, transcription factor that binds a palindromic (canonical) core consensus DNA sequence 5'-CANNTG- 3' known as an E-box element, possibly as a heterodimer with other bHLH proteins. Regulates endothelial cell proliferation, migration and tube-like structures formation. Modulates endothelial cell differentiation through NOS3. May be implicated in specification and differentiation of neuronal cell lineages in the brain. May participate in kidney development and may be involved in podocyte differentiation. During early embryonic development is involved in tissue-specific differentiation processes that are dependent on class II bHLH factors and namely modulates the differentiation program initiated by the pro-endocrine factor NEUROG3. During myogenesis, may play a role during the transition of myoblasts from the proliferative phase to the differentiation phase. Positively regulates HAMP transcription in two ways, firstly by acting directly on the HAMP promoter via E-boxes binding and indirectly through increased phosphorylation of SMAD protein complex. Repress NEUROG3-dependent gene activation in a gene-specific manner through at least two mechanisms; requires only either the sequestering of a general partner such as TCF3 through heterodimerization, either also requires binding of the bHLH domain to DNA via a basic motif. In Mus musculus (Mouse), this protein is Transcription factor Atoh8.